The following is a 1481-amino-acid chain: Cystic fibrosis transmembrane conductance regulator (1481 aa).

The Cytoplasmic portion of the chain corresponds to 1-77; it reads MQRSPLEKAS…KLINALRRCF (77 aa). A helical membrane pass occupies residues 78-98; the sequence is FWRFMFYGILLYLGEVTKAVQ. The region spanning 81–365 is the ABC transmembrane type-1 1 domain; sequence FMFYGILLYL…WAVQTWYDSL (285 aa). Topologically, residues 99-122 are extracellular; that stretch reads PLLLGRIIASYDPDNKEERSIAIY. Residues 123 to 146 traverse the membrane as a helical segment; it reads LGIGLCLLFIVRTLLLHPAIFGLH. Over 147–195 the chain is Cytoplasmic; the sequence is HIGMQMRIAMFSLIYKKTLKLSSRVLDKISIGQLVSLLSNNLNKFDEGL. A helical transmembrane segment spans residues 196–216; sequence ALAHFVWIVPLQVALLMGLIW. Residues 217–222 lie on the Extracellular side of the membrane; that stretch reads ELLQAS. Residues 223-243 form a helical membrane-spanning segment; that stretch reads AFCGLGFLIVLALFQAGLGRM. Topologically, residues 244–298 are cytoplasmic; the sequence is MMKYRDQRAGKINERLVITSEMIENIQSVKAYCWEEAMEKMIENLRQTELKLTRK. Residues 299-319 form a helical membrane-spanning segment; the sequence is AAYVRYFNSSAFFFSGFFVVF. Over 320 to 339 the chain is Extracellular; the sequence is LSVLPYALIKGIVLRKIFTT. The chain crosses the membrane as a helical span at residues 340 to 358; it reads ISFCIVLRMAVTRQFPWAV. The Cytoplasmic portion of the chain corresponds to 359–858; the sequence is QTWYDSLGAI…YLRYITVHKS (500 aa). ATP is bound by residues tryptophan 401, serine 434, 458-465, and glutamine 493; that span reads GSTGAGKT. An ABC transporter 1 domain is found at 423–646; the sequence is NDDDSLFFSN…RPDFSSKLMG (224 aa). Cysteine 524 is lipidated: S-palmitoyl cysteine. Phosphoserine occurs at positions 549 and 660. Positions 654–831 are disordered R region; sequence SAERRNSILT…EEINEEDLKE (178 aa). Position 670 is a phosphoserine; by PKA (serine 670). Serine 686 is modified (phosphoserine). A Glycyl lysine isopeptide (Lys-Gly) (interchain with G-Cter in ubiquitin) cross-link involves residue lysine 688. Serine 700 and serine 712 each carry phosphoserine. Threonine 717 is modified (phosphothreonine). Phosphoserine is present on residues serine 737, serine 753, serine 768, serine 790, serine 795, and serine 813. A helical transmembrane segment spans residues 859 to 879; that stretch reads LIFVLIWCLVIFLAEVAASLV. Positions 859-1155 constitute an ABC transmembrane type-1 2 domain; the sequence is LIFVLIWCLV…AVNSSIDVDS (297 aa). Residues 880–918 lie on the Extracellular side of the membrane; sequence VLWFLGNTPPQDKGNSTYSRNNSYAVIITRTSSYYVFYI. N-linked (GlcNAc...) asparagine glycans are attached at residues asparagine 894 and asparagine 900. A discontinuously helical transmembrane segment spans residues 919-939; sequence YVGVADTLLAMGFFRGLPLVH. The Cytoplasmic portion of the chain corresponds to 940-990; it reads TLITVSKILHHKMLHSVLQAPMSTLNTLKAGGILNRFSKDIAILDDLLPLT. The helical transmembrane segment at 991 to 1011 threads the bilayer; it reads IFDFIQLLLIVIGAIAVVAVL. Topologically, residues 1012-1013 are extracellular; sequence QP. Residues 1014 to 1034 traverse the membrane as a helical segment; sequence YIFVATVPVIVAFIMLRAYFL. Over 1035–1095 the chain is Cytoplasmic; it reads QTSQQLKQLE…TANWFLYLST (61 aa). The chain crosses the membrane as a helical span at residues 1096-1116; that stretch reads LRWFQMRIEMIFVIFFIAVTF. Residues 1117 to 1130 lie on the Extracellular side of the membrane; that stretch reads ISILTTGEGEGTVG. A helical transmembrane segment spans residues 1131–1151; that stretch reads IILTLAMNIMSTLQWAVNSSI. At 1152–1481 the chain is on the cytoplasmic side; sequence DVDSLMRSVS…TEEEVQDTRL (330 aa). One can recognise an ABC transporter 2 domain in the interval 1211–1444; that stretch reads MTVKDLTAKY…RSLFRQAISP (234 aa). ATP contacts are provided by residues tyrosine 1220 and 1245-1252; that span reads GRTGSGKS. Residues 1387 to 1481 are interaction with GORASP2; that stretch reads RTLKQAFADC…TEEEVQDTRL (95 aa). Cysteine 1396 carries the S-palmitoyl cysteine lipid modification. Phosphoserine occurs at positions 1445 and 1457. The interval 1462 to 1481 is disordered; that stretch reads QPQIAALKEETEEEVQDTRL. The segment covering 1471-1481 has biased composition (acidic residues); that stretch reads ETEEEVQDTRL. The PDZ-binding signature appears at 1479–1481; sequence TRL.

This sequence belongs to the ABC transporter superfamily. ABCC family. CFTR transporter (TC 3.A.1.202) subfamily. In terms of assembly, monomer; does not require oligomerization for channel activity. May form oligomers in the membrane. Interacts with SLC26A3, SLC26A6 and NHERF1. Interacts with SHANK2. Interacts with MYO6. Interacts (via C-terminus) with GOPC (via PDZ domain); this promotes CFTR internalization and thereby decreases channel activity. Interacts with SLC4A7 through NHERF1. Found in a complex with MYO5B and RAB11A. Interacts with ANO1. Interacts with SLC26A8. Interacts with AHCYL1; the interaction increases CFTR activity. Interacts with CSE1L. The core-glycosylated form interacts with GORASP2 (via PDZ GRASP-type 1 domain) in respone to ER stress. Interacts with MARCHF2; the interaction leads to CFTR ubiqtuitination and degradation. Interacts with ADGRG2. In terms of processing, N-glycosylated. Post-translationally, phosphorylated; cAMP treatment promotes phosphorylation and activates the channel. Dephosphorylation decreases the ATPase activity (in vitro). Phosphorylation at PKA sites activates the channel. Phosphorylation at PKC sites enhances the response to phosphorylation by PKA. Phosphorylated by AMPK; this inhibits channel activity. Ubiquitinated, leading to its degradation in the lysosome. Deubiquitination by USP10 in early endosomes enhances its endocytic recycling to the cell membrane. Ubiquitinated by RNF185 during ER stress. Ubiquitinated by MARCHF2.

Its subcellular location is the apical cell membrane. It is found in the early endosome membrane. The protein localises to the cell membrane. It localises to the recycling endosome membrane. The protein resides in the endoplasmic reticulum membrane. Its subcellular location is the nucleus. It catalyses the reaction ATP + H2O + closed Cl(-) channel = ADP + phosphate + open Cl(-) channel.. The catalysed reaction is chloride(in) = chloride(out). The enzyme catalyses hydrogencarbonate(in) = hydrogencarbonate(out). It carries out the reaction ATP + H2O = ADP + phosphate + H(+). Epithelial ion channel that plays an important role in the regulation of epithelial ion and water transport and fluid homeostasis. Mediates the transport of chloride ions across the cell membrane. Possesses an intrinsic ATPase activity and utilizes ATP to gate its channel; the passive flow of anions through the channel is gated by cycles of ATP binding and hydrolysis by the ATP-binding domains. The ion channel is also permeable to HCO(3)(-); selectivity depends on the extracellular chloride concentration. Exerts its function also by modulating the activity of other ion channels and transporters. Contributes to the regulation of the pH and the ion content of the epithelial fluid layer. Modulates the activity of the epithelial sodium channel (ENaC) complex, in part by regulating the cell surface expression of the ENaC complex. May regulate bicarbonate secretion and salvage in epithelial cells by regulating the transporter SLC4A7. Can inhibit the chloride channel activity of ANO1. Plays a role in the chloride and bicarbonate homeostasis during sperm epididymal maturation and capacitation. The chain is Cystic fibrosis transmembrane conductance regulator from Papio anubis (Olive baboon).